A 115-amino-acid polypeptide reads, in one-letter code: UPF0738 protein SERP0585 (115 aa).

The protein belongs to the UPF0738 family.

This is UPF0738 protein SERP0585 from Staphylococcus epidermidis (strain ATCC 35984 / DSM 28319 / BCRC 17069 / CCUG 31568 / BM 3577 / RP62A).